Reading from the N-terminus, the 201-residue chain is MSIKGIIAGLGNPGGQYEKTRHNIGFMVINKLITITSASKLSGKKFYCELWKTTTIIDNYLLAKPQTYMNLSGEAIHPLVEWYNITKDNLLVIHDELDLPIGKMKLQQGGGTAGHNGLKSIIHNLGTKDFYRLRIGIGRSPLPSENTVNWVLGHLSMKELTTLNNLFPTIFDALSFFIKDEKETAIRMINSFTLSETVNLS.

TRNA is bound at residue tyrosine 17. The active-site Proton acceptor is histidine 22. TRNA is bound by residues tyrosine 68, asparagine 70, and asparagine 116.

This sequence belongs to the PTH family. Monomer.

The protein localises to the cytoplasm. It catalyses the reaction an N-acyl-L-alpha-aminoacyl-tRNA + H2O = an N-acyl-L-amino acid + a tRNA + H(+). In terms of biological role, hydrolyzes ribosome-free peptidyl-tRNAs (with 1 or more amino acids incorporated), which drop off the ribosome during protein synthesis, or as a result of ribosome stalling. Its function is as follows. Catalyzes the release of premature peptidyl moieties from peptidyl-tRNA molecules trapped in stalled 50S ribosomal subunits, and thus maintains levels of free tRNAs and 50S ribosomes. The protein is Peptidyl-tRNA hydrolase of Lawsonia intracellularis (strain PHE/MN1-00).